A 583-amino-acid polypeptide reads, in one-letter code: MGIAKIPAVLWLLACAVLTFAVAISPAHGGRTRRHYDFFITETNYRRLCHEKSVLTVNGQFPGPTIYARKGDLVIVNVYNHGNKNITIHWHGVDQPRNPWSDGPEFITQCPIRPDGKFTYQVIMSEEEGTLWWHAHSDFDRATVLGAIVVHPKHGDTFPFKRPDKEIPIILGEWWKNDVNHLLEEMKRIGEDVKPSDANTINGQPGDMFPCSRDDTFKVAVEHGNTYLLQVINAGLTNDMFFAVSGHRLTVVGIDARYTKPLTVEYIMIAPGQTMDLLLEANRSLGSKSNSRYYMAARTFITLPVPIPFNNSTATAVVEYYTGDSGAGPPDFPAVLPSLDDVDAAMAFLRQLRSLGSKDHPVHVPTHVDEHMLIDLAINFLPCNATNATDTACKGPKGNTTRFAASLNNVSFVSPAIDVLHAYYYGSGRGVYEDDFPNNPAPVFVNLTGDNDRPGVTKHGAKVKVLEYGTVVEVVFQDTSFESHPMHLHGFAFYVVGLGSGKFDDRRDPATYNLLDPPYQSTVSVPKAGWAAIRFRADNPGVWFMHCHFDRHMVWGMNTVFIVKDGKTPQAQMLPRPPNMPKC.

A signal peptide spans 1-29; that stretch reads MGIAKIPAVLWLLACAVLTFAVAISPAHG. 2 Plastocyanin-like domains span residues 39-155 and 165-323; these read FITE…PKHG and KEIP…YYTG. Residue asparagine 85 is glycosylated (N-linked (GlcNAc...) asparagine). The Cu cation site is built by histidine 89, histidine 91, histidine 134, and histidine 136. Asparagine 282, asparagine 311, asparagine 384, asparagine 387, asparagine 399, asparagine 409, and asparagine 446 each carry an N-linked (GlcNAc...) asparagine glycan. Residues 436 to 567 enclose the Plastocyanin-like 3 domain; it reads FPNNPAPVFV…NTVFIVKDGK (132 aa). 8 residues coordinate Cu cation: histidine 484, histidine 487, histidine 489, histidine 546, cysteine 547, histidine 548, histidine 552, and methionine 557.

It belongs to the multicopper oxidase family. Cu cation is required as a cofactor.

Its subcellular location is the secreted. The protein resides in the extracellular space. It is found in the apoplast. It catalyses the reaction 4 hydroquinone + O2 = 4 benzosemiquinone + 2 H2O. Functionally, lignin degradation and detoxification of lignin-derived products. The chain is Laccase-21 (LAC21) from Oryza sativa subsp. japonica (Rice).